We begin with the raw amino-acid sequence, 296 residues long: Diaminopimelate epimerase (296 aa).

Asn-17, Gln-49, and Asn-69 together coordinate substrate. The active-site Proton donor is the Cys-78. Substrate is bound by residues 79 to 80 (GN), Asn-171, Asn-205, and 223 to 224 (ER). Residue Cys-232 is the Proton acceptor of the active site. 233-234 (GT) contacts substrate.

Belongs to the diaminopimelate epimerase family. In terms of assembly, homodimer.

The protein resides in the cytoplasm. The enzyme catalyses (2S,6S)-2,6-diaminopimelate = meso-2,6-diaminopimelate. The protein operates within amino-acid biosynthesis; L-lysine biosynthesis via DAP pathway; DL-2,6-diaminopimelate from LL-2,6-diaminopimelate: step 1/1. In terms of biological role, catalyzes the stereoinversion of LL-2,6-diaminopimelate (L,L-DAP) to meso-diaminopimelate (meso-DAP), a precursor of L-lysine and an essential component of the bacterial peptidoglycan. This is Diaminopimelate epimerase from Methylorubrum extorquens (strain PA1) (Methylobacterium extorquens).